The primary structure comprises 335 residues: Phosphate acyltransferase (335 aa).

The protein belongs to the PlsX family. In terms of assembly, homodimer. Probably interacts with PlsY.

It localises to the cytoplasm. The enzyme catalyses a fatty acyl-[ACP] + phosphate = an acyl phosphate + holo-[ACP]. Its pathway is lipid metabolism; phospholipid metabolism. Its function is as follows. Catalyzes the reversible formation of acyl-phosphate (acyl-PO(4)) from acyl-[acyl-carrier-protein] (acyl-ACP). This enzyme utilizes acyl-ACP as fatty acyl donor, but not acyl-CoA. In Desulforudis audaxviator (strain MP104C), this protein is Phosphate acyltransferase.